The chain runs to 420 residues: Serine--tRNA ligase (420 aa).

229–231 (TAE) is an L-serine binding site. Residue 260–262 (RAE) participates in ATP binding. Residue glutamate 283 participates in L-serine binding. 347–350 (EISS) is an ATP binding site. Serine 382 contributes to the L-serine binding site.

Belongs to the class-II aminoacyl-tRNA synthetase family. Type-1 seryl-tRNA synthetase subfamily. As to quaternary structure, homodimer. The tRNA molecule binds across the dimer.

Its subcellular location is the cytoplasm. It catalyses the reaction tRNA(Ser) + L-serine + ATP = L-seryl-tRNA(Ser) + AMP + diphosphate + H(+). It carries out the reaction tRNA(Sec) + L-serine + ATP = L-seryl-tRNA(Sec) + AMP + diphosphate + H(+). It functions in the pathway aminoacyl-tRNA biosynthesis; selenocysteinyl-tRNA(Sec) biosynthesis; L-seryl-tRNA(Sec) from L-serine and tRNA(Sec): step 1/1. In terms of biological role, catalyzes the attachment of serine to tRNA(Ser). Is also able to aminoacylate tRNA(Sec) with serine, to form the misacylated tRNA L-seryl-tRNA(Sec), which will be further converted into selenocysteinyl-tRNA(Sec). The sequence is that of Serine--tRNA ligase from Caldicellulosiruptor bescii (strain ATCC BAA-1888 / DSM 6725 / KCTC 15123 / Z-1320) (Anaerocellum thermophilum).